A 150-amino-acid chain; its full sequence is Urease accessory protein UreE (150 aa).

The protein belongs to the UreE family.

The protein resides in the cytoplasm. Functionally, involved in urease metallocenter assembly. Binds nickel. Probably functions as a nickel donor during metallocenter assembly. The polypeptide is Urease accessory protein UreE (Staphylococcus carnosus (strain TM300)).